The primary structure comprises 188 residues: Adenine phosphoribosyltransferase (188 aa).

It belongs to the purine/pyrimidine phosphoribosyltransferase family. In terms of assembly, homodimer.

It is found in the cytoplasm. It carries out the reaction AMP + diphosphate = 5-phospho-alpha-D-ribose 1-diphosphate + adenine. Its pathway is purine metabolism; AMP biosynthesis via salvage pathway; AMP from adenine: step 1/1. Catalyzes a salvage reaction resulting in the formation of AMP, that is energically less costly than de novo synthesis. The polypeptide is Adenine phosphoribosyltransferase (Burkholderia ambifaria (strain MC40-6)).